Consider the following 259-residue polypeptide: Flap endonuclease Xni (259 aa).

Asp-109 provides a ligand contact to Mg(2+). The 5'-3' exonuclease domain occupies Leu-165–Lys-255. 4 residues coordinate K(+): Leu-176, Ala-177, Ile-187, and Val-190. The interaction with DNA stretch occupies residues Gly-189–Ala-194.

The protein belongs to the Xni family. Mg(2+) serves as cofactor. It depends on K(+) as a cofactor.

Its function is as follows. Has flap endonuclease activity. During DNA replication, flap endonucleases cleave the 5'-overhanging flap structure that is generated by displacement synthesis when DNA polymerase encounters the 5'-end of a downstream Okazaki fragment. This Aliivibrio fischeri (strain ATCC 700601 / ES114) (Vibrio fischeri) protein is Flap endonuclease Xni.